A 940-amino-acid polypeptide reads, in one-letter code: Isoleucine--tRNA ligase (940 aa).

Residues 59-69 (PYANGDIHIGH) carry the 'HIGH' region motif. Position 563 (Glu563) interacts with L-isoleucyl-5'-AMP. The short motif at 604 to 608 (KMSKS) is the 'KMSKS' region element. Residue Lys607 coordinates ATP. Positions 903, 906, 923, and 926 each coordinate Zn(2+).

The protein belongs to the class-I aminoacyl-tRNA synthetase family. IleS type 1 subfamily. Monomer. Zn(2+) is required as a cofactor.

It is found in the cytoplasm. It catalyses the reaction tRNA(Ile) + L-isoleucine + ATP = L-isoleucyl-tRNA(Ile) + AMP + diphosphate. Catalyzes the attachment of isoleucine to tRNA(Ile). As IleRS can inadvertently accommodate and process structurally similar amino acids such as valine, to avoid such errors it has two additional distinct tRNA(Ile)-dependent editing activities. One activity is designated as 'pretransfer' editing and involves the hydrolysis of activated Val-AMP. The other activity is designated 'posttransfer' editing and involves deacylation of mischarged Val-tRNA(Ile). This chain is Isoleucine--tRNA ligase, found in Wigglesworthia glossinidia brevipalpis.